A 557-amino-acid chain; its full sequence is Alpha-barbatene synthase (557 aa).

(2E,6E)-farnesyl diphosphate is bound by residues R273, D310, D314, R451, and D454. Residues D310 and D314 each contribute to the Mg(2+) site. The DDXXD motif motif lies at 310–314 (DDACD). Mg(2+)-binding residues include D454, D455, and D462.

This sequence belongs to the terpene synthase family. Tpsa subfamily. Monomer. The cofactor is Mg(2+). Mn(2+) is required as a cofactor. In terms of tissue distribution, expressed exclusively in flowers. Expressed in intrafloral nectaries and in the funiculus within the ovules.

It is found in the cytoplasm. It catalyses the reaction (2E,6E)-farnesyl diphosphate = (+)-alpha-barbatene + diphosphate. The enzyme catalyses (2E,6E)-farnesyl diphosphate = (+)-thujopsene + diphosphate. The catalysed reaction is (2E,6E)-farnesyl diphosphate = (+)-beta-chamigrene + diphosphate. It carries out the reaction (2E,6E)-farnesyl diphosphate = (+)-beta-barbatene + diphosphate. It catalyses the reaction (2E,6E)-farnesyl diphosphate = beta-sesquiphellandrene + diphosphate. The enzyme catalyses (2E,6E)-farnesyl diphosphate = (S)-beta-bisabolene + diphosphate. The catalysed reaction is (2E,6E)-farnesyl diphosphate = (-)-alpha-cuprenene + diphosphate. It carries out the reaction (2E,6E)-farnesyl diphosphate = alpha-zingiberene + diphosphate. It catalyses the reaction (2E,6E)-farnesyl diphosphate = beta-acoradiene + diphosphate. The enzyme catalyses (2E,6E)-farnesyl diphosphate = (E)-beta-farnesene + diphosphate. The protein operates within secondary metabolite biosynthesis; terpenoid biosynthesis. In terms of biological role, involved in the biosynthesis of over 15 sesquiterpenes (C15). The major products are (+)-alpha-barbatene (27.3%), (+)-thujopsene (17.8%) and (+)-beta-chamigrene (9.9%). Can use farnesyl diphosphate or geranyl diphosphate as substrates, but not geranylgeranyl diphosphate. The chain is Alpha-barbatene synthase from Arabidopsis thaliana (Mouse-ear cress).